Here is a 253-residue protein sequence, read N- to C-terminus: 5-oxoprolinase subunit A (253 aa).

The protein belongs to the LamB/PxpA family. In terms of assembly, forms a complex composed of PxpA, PxpB and PxpC.

The catalysed reaction is 5-oxo-L-proline + ATP + 2 H2O = L-glutamate + ADP + phosphate + H(+). Catalyzes the cleavage of 5-oxoproline to form L-glutamate coupled to the hydrolysis of ATP to ADP and inorganic phosphate. The protein is 5-oxoprolinase subunit A of Chloroflexus aurantiacus (strain ATCC 29364 / DSM 637 / Y-400-fl).